The primary structure comprises 377 residues: Erythronate-4-phosphate dehydrogenase (377 aa).

Substrate contacts are provided by Ser-45 and Thr-67. NAD(+) contacts are provided by residues Asp-147, 210 to 212, and Asp-236; that span reads ASR. Arg-212 is a catalytic residue. Glu-241 is an active-site residue. The active-site Proton donor is the His-258. Position 261 (Gly-261) interacts with NAD(+). Tyr-262 provides a ligand contact to substrate.

This sequence belongs to the D-isomer specific 2-hydroxyacid dehydrogenase family. PdxB subfamily. In terms of assembly, homodimer.

It localises to the cytoplasm. It catalyses the reaction 4-phospho-D-erythronate + NAD(+) = (R)-3-hydroxy-2-oxo-4-phosphooxybutanoate + NADH + H(+). It functions in the pathway cofactor biosynthesis; pyridoxine 5'-phosphate biosynthesis; pyridoxine 5'-phosphate from D-erythrose 4-phosphate: step 2/5. Functionally, catalyzes the oxidation of erythronate-4-phosphate to 3-hydroxy-2-oxo-4-phosphonooxybutanoate. The protein is Erythronate-4-phosphate dehydrogenase of Aeromonas salmonicida (strain A449).